The sequence spans 267 residues: 4-hydroxy-tetrahydrodipicolinate reductase (267 aa).

Residues 8–13 (GAAGRM) and D34 each bind NAD(+). NADP(+) is bound at residue R35. NAD(+)-binding positions include 98 to 100 (GTT) and 122 to 125 (AANF). H155 (proton donor/acceptor) is an active-site residue. H156 is a binding site for (S)-2,3,4,5-tetrahydrodipicolinate. Catalysis depends on K159, which acts as the Proton donor. 165–166 (GT) provides a ligand contact to (S)-2,3,4,5-tetrahydrodipicolinate.

It belongs to the DapB family.

The protein resides in the cytoplasm. The catalysed reaction is (S)-2,3,4,5-tetrahydrodipicolinate + NAD(+) + H2O = (2S,4S)-4-hydroxy-2,3,4,5-tetrahydrodipicolinate + NADH + H(+). The enzyme catalyses (S)-2,3,4,5-tetrahydrodipicolinate + NADP(+) + H2O = (2S,4S)-4-hydroxy-2,3,4,5-tetrahydrodipicolinate + NADPH + H(+). It participates in amino-acid biosynthesis; L-lysine biosynthesis via DAP pathway; (S)-tetrahydrodipicolinate from L-aspartate: step 4/4. In terms of biological role, catalyzes the conversion of 4-hydroxy-tetrahydrodipicolinate (HTPA) to tetrahydrodipicolinate. This is 4-hydroxy-tetrahydrodipicolinate reductase from Pseudomonas putida (strain ATCC 700007 / DSM 6899 / JCM 31910 / BCRC 17059 / LMG 24140 / F1).